We begin with the raw amino-acid sequence, 222 residues long: V-type ATP synthase subunit D (222 aa).

The protein belongs to the V-ATPase D subunit family.

Its function is as follows. Produces ATP from ADP in the presence of a proton gradient across the membrane. The protein is V-type ATP synthase subunit D of Deinococcus geothermalis (strain DSM 11300 / CIP 105573 / AG-3a).